Here is a 276-residue protein sequence, read N- to C-terminus: Secretagogin (276 aa).

6 EF-hand domains span residues 12 to 47 (LDAAGFWQIWQRFDADEKGYIEEKELDAFFHHVLTK), 58 to 93 (NVWKMKQQFMAAHDVSKDGHIQMKELACLFLSEDEN), 105 to 140 (DSSVEFMQIWRKYDADSSGFISAAELCNFLRDLFLH), 149 to 184 (KLEEYTGTMMKIFDKNKDGRLDLNDLARILALQENF), 197 to 232 (ERKRDFEKIFAHYDVSKTGALEGPEVDGFVKDMMEL), and 240 to 276 (VDLDKFREILLRHCDVNKDGKIQKSELALCLGLKINP). Residues aspartate 71, serine 73, aspartate 75, histidine 77, glutamate 82, aspartate 118, aspartate 120, serine 122, glutamate 129, aspartate 162, asparagine 164, aspartate 166, arginine 168, aspartate 173, aspartate 210, serine 212, threonine 214, glutamate 221, aspartate 254, asparagine 256, aspartate 258, lysine 260, and glutamate 265 each coordinate Ca(2+).

The protein resides in the cytoplasm. It localises to the secreted. Its subcellular location is the cytoplasmic vesicle. The protein localises to the secretory vesicle membrane. In Sus scrofa (Pig), this protein is Secretagogin (SCGN).